A 1045-amino-acid chain; its full sequence is Eukaryotic translation initiation factor 5B (1045 aa).

Disordered regions lie at residues 1-325 (MGPK…AAEA) and 339-384 (SAVG…PKDD). Over residues 8–27 (RKDNYWDSGEADKDREEAEK) the composition is skewed to basic and acidic residues. Over residues 62 to 73 (SSSESEESSSEE) the composition is skewed to acidic residues. Residues 81 to 92 (KPAAKQSKKVAP) are compositionally biased toward low complexity. Composition is skewed to acidic residues over residues 105-120 (SSEEEESESESEESSE), 155-169 (SSEESESESEESSSE), and 199-212 (SESEEESSSSEEEE). The segment covering 216–241 (KPTQNNNNKKNNAKKPPAAKPSAAKQ) has biased composition (low complexity). Basic and acidic residues predominate over residues 264-325 (QRQEEERIAR…EKQAGAAAEA (62 aa)). A compositionally biased stretch (low complexity) spans 351–361 (KTKSGGKKQNQ). Basic and acidic residues predominate over residues 368 to 384 (SVEKLKIEEPTSAPKDD). One can recognise a tr-type G domain in the interval 458–675 (YRSPIICILG…VVIQLMQKLM (218 aa)). Residues 467–474 (GHVDTGKT) are G1. 467-474 (GHVDTGKT) provides a ligand contact to GTP. Positions 492–496 (GITQQ) are G2. Positions 531 to 534 (DTPG) are G3. Residues 585-588 (NKVD) form a G4 region. The tract at residues 653-655 (SAN) is G5.

The protein belongs to the TRAFAC class translation factor GTPase superfamily. Classic translation factor GTPase family. IF-2 subfamily. A monovalent cation is required as a cofactor.

It is found in the cytoplasm. It carries out the reaction GTP + H2O = GDP + phosphate + H(+). Its function is as follows. Plays a role in translation initiation. Translational GTPase that catalyzes the joining of the 40S and 60S subunits to form the 80S initiation complex with the initiator methionine-tRNA in the P-site base paired to the start codon. GTP binding and hydrolysis induces conformational changes in the enzyme that renders it active for productive interactions with the ribosome. The release of the enzyme after formation of the initiation complex is a prerequisite to form elongation-competent ribosomes. The sequence is that of Eukaryotic translation initiation factor 5B (eif5b) from Dictyostelium discoideum (Social amoeba).